The following is a 295-amino-acid chain: Glycine--tRNA ligase alpha subunit (295 aa).

The protein belongs to the class-II aminoacyl-tRNA synthetase family. As to quaternary structure, tetramer of two alpha and two beta subunits.

The protein localises to the cytoplasm. It carries out the reaction tRNA(Gly) + glycine + ATP = glycyl-tRNA(Gly) + AMP + diphosphate. This Rhodospirillum rubrum (strain ATCC 11170 / ATH 1.1.1 / DSM 467 / LMG 4362 / NCIMB 8255 / S1) protein is Glycine--tRNA ligase alpha subunit.